A 128-amino-acid polypeptide reads, in one-letter code: Small ribosomal subunit protein uS14m (128 aa).

The protein belongs to the universal ribosomal protein uS14 family. In terms of assembly, component of the mitochondrial ribosome small subunit (28S) which comprises a 12S rRNA and about 30 distinct proteins. Interacts with LIAT1.

Its subcellular location is the mitochondrion. The protein is Small ribosomal subunit protein uS14m (Mrps14) of Mus musculus (Mouse).